Here is a 258-residue protein sequence, read N- to C-terminus: Imidazole glycerol phosphate synthase subunit HisF (258 aa).

Active-site residues include Asp-11 and Asp-130.

It belongs to the HisA/HisF family. As to quaternary structure, heterodimer of HisH and HisF.

Its subcellular location is the cytoplasm. The enzyme catalyses 5-[(5-phospho-1-deoxy-D-ribulos-1-ylimino)methylamino]-1-(5-phospho-beta-D-ribosyl)imidazole-4-carboxamide + L-glutamine = D-erythro-1-(imidazol-4-yl)glycerol 3-phosphate + 5-amino-1-(5-phospho-beta-D-ribosyl)imidazole-4-carboxamide + L-glutamate + H(+). The protein operates within amino-acid biosynthesis; L-histidine biosynthesis; L-histidine from 5-phospho-alpha-D-ribose 1-diphosphate: step 5/9. Its function is as follows. IGPS catalyzes the conversion of PRFAR and glutamine to IGP, AICAR and glutamate. The HisF subunit catalyzes the cyclization activity that produces IGP and AICAR from PRFAR using the ammonia provided by the HisH subunit. The protein is Imidazole glycerol phosphate synthase subunit HisF of Stenotrophomonas maltophilia (strain R551-3).